A 126-amino-acid polypeptide reads, in one-letter code: Small ribosomal subunit protein bS6 (126 aa).

Residues 103 to 126 (LKAKDERKAPEALVEEVEAEDADE) are disordered. Positions 115–126 (LVEEVEAEDADE) are enriched in acidic residues.

It belongs to the bacterial ribosomal protein bS6 family.

Binds together with bS18 to 16S ribosomal RNA. This chain is Small ribosomal subunit protein bS6, found in Glaesserella parasuis serovar 5 (strain SH0165) (Haemophilus parasuis).